The chain runs to 228 residues: Endonuclease V (228 aa).

Mg(2+)-binding residues include Asp36 and Asp104.

It belongs to the endonuclease V family. Mg(2+) serves as cofactor.

The protein resides in the cytoplasm. It carries out the reaction Endonucleolytic cleavage at apurinic or apyrimidinic sites to products with a 5'-phosphate.. DNA repair enzyme involved in the repair of deaminated bases. Selectively cleaves double-stranded DNA at the second phosphodiester bond 3' to a deoxyinosine leaving behind the intact lesion on the nicked DNA. This Serratia proteamaculans (strain 568) protein is Endonuclease V.